The following is a 164-amino-acid chain: Endoribonuclease YbeY (164 aa).

Histidine 124, histidine 128, and histidine 134 together coordinate Zn(2+).

This sequence belongs to the endoribonuclease YbeY family. Zn(2+) is required as a cofactor.

The protein resides in the cytoplasm. Functionally, single strand-specific metallo-endoribonuclease involved in late-stage 70S ribosome quality control and in maturation of the 3' terminus of the 16S rRNA. The protein is Endoribonuclease YbeY of Nitrosomonas europaea (strain ATCC 19718 / CIP 103999 / KCTC 2705 / NBRC 14298).